The primary structure comprises 1094 residues: Probable serine/threonine-protein kinase kinX (1094 aa).

One can recognise a Protein kinase domain in the interval 22 to 281; sequence LDFISEIGSG…QTLKQIKTTL (260 aa). ATP-binding positions include 28–36 and lysine 49; that span reads IGSGGFGKV. Aspartate 146 acts as the Proton acceptor in catalysis. 2 disordered regions span residues 301 to 884 and 946 to 1083; these read TTNG…SVED and IKVE…PNNK. Residues 330–344 show a composition bias toward acidic residues; it reads YDDDDDDDDDDDDND. A compositionally biased stretch (polar residues) spans 351–373; it reads SDNSNSNVTLESNSNYNSSTING. Positions 374–387 are enriched in low complexity; the sequence is QEQQEQQEQQQQQQ. A compositionally biased stretch (acidic residues) spans 393 to 408; the sequence is DEGEIEQDDDNIEVYD. The span at 410–424 shows a compositional bias: basic and acidic residues; it reads DYQKKLEEHQKELLE. Acidic residues-rich tracts occupy residues 433–454, 480–496, and 503–523; these read STDE…EEEQ, DDED…EGDE, and DFDE…DEDE. Composition is skewed to low complexity over residues 526-542 and 564-585; these read IQYY…LQKQ and RQLQ…QHQQ. The segment covering 587–602 has biased composition (acidic residues); sequence YDDDDDDDDEEEEEYD. Over residues 603–639 the composition is skewed to basic and acidic residues; that stretch reads DVIRHDTDSEEESKDKTPLPWDQHFEKQKESENKVEQ. Positions 650–661 are enriched in low complexity; it reads QETEQQQQQQQQ. The span at 670 to 801 shows a compositional bias: basic and acidic residues; the sequence is PTKVEDVKVE…EPVEEVKVEE (132 aa). The tract at residues 676-978 is 40 X 9 AA approximate repeats of V-K-V-E-E-P-V-E-E; sequence VKVETEEQTK…PVKVEVASPV (303 aa). Residues 802–816 show a composition bias toward acidic residues; it reads PVEEVEAEESVQEPV. Basic and acidic residues-rich tracts occupy residues 817–884 and 946–971; these read EEVK…SVED and IKVE…EPVK. Low complexity-rich tracts occupy residues 972 to 985 and 992 to 1011; these read VEVA…QPPQ and VVST…SNSP. The segment covering 1016 to 1031 has biased composition (polar residues); the sequence is VKQPQQQEIEVNSTPI. Residues 1032–1050 show a composition bias toward low complexity; the sequence is KQQQQQQQTPTQQTQTPTK.

Belongs to the protein kinase superfamily. TKL Ser/Thr protein kinase family.

It catalyses the reaction L-seryl-[protein] + ATP = O-phospho-L-seryl-[protein] + ADP + H(+). The catalysed reaction is L-threonyl-[protein] + ATP = O-phospho-L-threonyl-[protein] + ADP + H(+). This chain is Probable serine/threonine-protein kinase kinX (kinX), found in Dictyostelium discoideum (Social amoeba).